The sequence spans 713 residues: Elongation factor G (713 aa).

One can recognise a tr-type G domain in the interval 8 to 290 (ERYRNFGIMA…GVIQLLPSPV (283 aa)). GTP is bound by residues 17–24 (AHIDAGKT), 88–92 (DTPGH), and 142–145 (NKMD).

This sequence belongs to the TRAFAC class translation factor GTPase superfamily. Classic translation factor GTPase family. EF-G/EF-2 subfamily.

The protein resides in the cytoplasm. In terms of biological role, catalyzes the GTP-dependent ribosomal translocation step during translation elongation. During this step, the ribosome changes from the pre-translocational (PRE) to the post-translocational (POST) state as the newly formed A-site-bound peptidyl-tRNA and P-site-bound deacylated tRNA move to the P and E sites, respectively. Catalyzes the coordinated movement of the two tRNA molecules, the mRNA and conformational changes in the ribosome. In Stenotrophomonas maltophilia (strain K279a), this protein is Elongation factor G.